Reading from the N-terminus, the 565-residue chain is MSTGKNAPVTENSRQMSLQACLDECMEALDLFLNNHFNESLDKLRPRSKESMYHALIYATVLEMQAMMTFQQDDIVHAGNTMKSAQEVCQRFRKKSGGLGSRGANDDLSEEQIHAEVCYAECLLHRAALTFLQDENMVSFIKGGIKVRNSYLIYKELHAFIQSDATFKGPNHKHLEGGVSFGIGAFNLTLSLFPARILKLLEFAGFSGDKEFGISQLYTGATSHTLRSMLCALLLLCFYTFLSFILGTGEGEVEEAERLLKPFRLRYPRGAIFLFFAGRAEEIKGNIDEAVALFEDGCKAQQVWKQFHHMCYWELMWCFTFKRYWKMAYFYADLLSQESRWSKAMYVYMKAAYLSMLPDSESRPFGDNEVDLFRQVPTYKQKIAGKSPPTEKFAIRKARRYKASNPVRLPVPVLEMMYMWNGFSMISKQPELTEGMMETLLEAERTLRASPDNEYTVDDTCLIQLLKGLCLKNQGQMQAAEDCFNQVYISEKKLKFDHYLVPNALLEMSLLFIDTGRKEQAIKLLQKAKNNYKVYSMESRTQFRVHAALTKLKADVSDQEEITAL.

TPR repeat units lie at residues Ala-271–Trp-304, Cys-461–Leu-494, and Pro-502–Tyr-535.

The protein belongs to the TTC39 family.

The polypeptide is Tetratricopeptide repeat protein 39A (ttc39a) (Danio rerio (Zebrafish)).